The following is a 688-amino-acid chain: MDGSFVQHSVRVLQELNKQREKGQYCDATLDVGGLVFKAHWSVLACCSHFFQSLYGDGSGGSVVLPAGFAEIFGLLLDFFYTGHLALTSGNRDQVLLAARELRVPEAVELCQSFKPKTSVGQAAGGQSGLGPPASQNVNSHVKEPAGLEEEEVSRTLGLVPRDQEPRGSHSPQRPQLHSPAQSEGPSSLCGKLKQALKPCPLEDKKPEDCKVPPRPLEAEGAQLQGGSNEWEVVVQVEDDGDGDYMSEPEAVLTRRKSNVIRKPCAAEPALSAGSLAAEPAENRKGTAVPVECPTCHKKFLSKYYLKVHNRKHTGEKPFECPKCGKCYFRKENLLEHEARNCMNRSEQVFTCSVCQETFRRRMELRVHMVSHTGEMPYKCSSCSQQFMQKKDLQSHMIKLHGAPKPHACPTCAKCFLSRTELQLHEAFKHRGEKLFVCEECGHRASSRNGLQMHIKAKHRNERPHVCEFCSHAFTQKANLNMHLRTHTGEKPFQCHLCGKTFRTQASLDKHNRTHTGERPFSCEFCEQRFTEKGPLLRHVASRHQEGRPHFCQICGKTFKAVEQLRVHVRRHKGVRKFECTECGYKFTRQAHLRRHMEIHDRVENYNPRQRKLRNLIIEDEKMVVVALQPPAELEVGSAEVIVESLAQGGLASQLPGQRLCAEESFTGPGVLEPSLIITAAVPEDCDT.

The region spanning 26–89 (CDATLDVGGL…FYTGHLALTS (64 aa)) is the BTB domain. Residues 119 to 140 (SVGQAAGGQSGLGPPASQNVNS) form a disordered region. A Glycyl lysine isopeptide (Lys-Gly) (interchain with G-Cter in SUMO2) cross-link involves residue lysine 143. The segment at 161-192 (PRDQEPRGSHSPQRPQLHSPAQSEGPSSLCGK) is disordered. Phosphoserine occurs at positions 169, 171, and 179. Residues 170–186 (HSPQRPQLHSPAQSEGP) are compositionally biased toward polar residues. Residue lysine 263 forms a Glycyl lysine isopeptide (Lys-Gly) (interchain with G-Cter in SUMO2) linkage. A C2H2-type 1 zinc finger spans residues 291–313 (VECPTCHKKFLSKYYLKVHNRKH). Zn(2+)-binding residues include cysteine 293, cysteine 296, histidine 309, histidine 313, cysteine 321, cysteine 324, histidine 337, cysteine 342, cysteine 352, cysteine 355, histidine 368, histidine 372, cysteine 380, cysteine 383, histidine 396, and histidine 401. The segment at 319–344 (FECPKCGKCYFRKENLLEHEARNCMN) adopts a CCHC-type zinc-finger fold. 9 C2H2-type zinc fingers span residues 350–372 (FTCS…MVSH), 378–401 (YKCS…IKLH), 407–430 (HACP…AFKH), 436–459 (FVCE…KAKH), 465–487 (HVCE…LRTH), 493–515 (FQCH…NRTH), 521–544 (FSCE…ASRH), 550–572 (HFCQ…VRRH), and 578–600 (FECT…MEIH). Zn(2+) contacts are provided by cysteine 552, cysteine 555, histidine 568, cysteine 580, cysteine 583, histidine 596, and histidine 600.

The protein belongs to the krueppel C2H2-type zinc-finger protein family. Interacts with EP300. Detected in adrenal gland and neuroblastoma.

It localises to the nucleus. The protein localises to the chromosome. The protein resides in the telomere. Functionally, plays a critical role in transcriptional regulation and chromatin remodeling. Acts as a regulator of telomere length. Directly binds the telomeric double-stranded 5'-TTAGGG-3' repeat. Preferentially binds to telomeres that have a low concentration of shelterin complex and acts as a regulator of telomere length by initiating telomere trimming, a process that prevents the accumulation of aberrantly long telomeres. Also acts as a transcription regulator that binds to promoter regions. Regulates expression of a small subset of genes, including MTFP1. Acts as a negative regulator of cell proliferation by specifically activating expression of ARF, a tumor suppressor isoform of CDKN2A. Acts as a transcription regulator of CIITA, the major factor regulating MHC class II gene expression. In addition, regulates cellular m6A/m6Am methylation on RNA by facilitating the recruitment of the RNA demethylase, FTO, to target mRNAs. In Homo sapiens (Human), this protein is Zinc finger and BTB domain-containing protein 48.